A 409-amino-acid chain; its full sequence is MFNMNLLSTPSSEEGSPQNRSSSMSSVEGKKDRDTFTNLQNEFDGKVFGVSLEESLKVAQEEVIIQKSTNEIGSIPVVIAKSGKYLKENALDTTGIFRIAGSNKRVRELQAVFSKPPDYGRKFEGWCDFNVHDIATLLKRYLNSLSEPLVPLALYDIFRNPILENPKINEHKEQIIKDYEDIYMLLPQQNRHLILYLAALLNLFARNEKKNLMSASNLAAIVQPSLLSHPKDEMCPKEYEASRTVIEFLILHASDIIPNTEKANKDTMPHAGTVAKFNNITVPEMAIDSDEEDFVHPSIDDHMLPRSRALSDSNNFTIHHHHHHHHALFPSPIDFDNNGLSVPRSFKGRTLSAESLSPRLSKLLGNVGNSSNTGIKDPTERVPRGEHKTKHKQRQSWLRRLTSPSRTQP.

The segment covering 1 to 26 (MFNMNLLSTPSSEEGSPQNRSSSMSS) has biased composition (polar residues). Residues 1-32 (MFNMNLLSTPSSEEGSPQNRSSSMSSVEGKKD) form a disordered region. A Rho-GAP domain is found at 50-257 (VSLEESLKVA…FLILHASDII (208 aa)). Residues 362–409 (KLLGNVGNSSNTGIKDPTERVPRGEHKTKHKQRQSWLRRLTSPSRTQP) are disordered. Over residues 377 to 386 (DPTERVPRGE) the composition is skewed to basic and acidic residues.

In terms of assembly, interacts with RHO1.

Acts in signal transduction. Activates RHO1. The chain is Rho-GTPase-activating protein BAG7 (BAG7) from Saccharomyces cerevisiae (strain ATCC 204508 / S288c) (Baker's yeast).